Reading from the N-terminus, the 332-residue chain is Glyceraldehyde-3-phosphate dehydrogenase 2 (332 aa).

Residues 11-12 (RI), Asp-32, and Arg-77 each bind NAD(+). Residues 148 to 150 (SCT), Thr-179, 208 to 209 (TG), and Arg-231 each bind D-glyceraldehyde 3-phosphate. The Nucleophile role is filled by Cys-149. Asn-313 serves as a coordination point for NAD(+).

It belongs to the glyceraldehyde-3-phosphate dehydrogenase family. Homotetramer.

Its subcellular location is the cytoplasm. The catalysed reaction is D-glyceraldehyde 3-phosphate + phosphate + NAD(+) = (2R)-3-phospho-glyceroyl phosphate + NADH + H(+). The protein operates within carbohydrate degradation; glycolysis; pyruvate from D-glyceraldehyde 3-phosphate: step 1/5. This chain is Glyceraldehyde-3-phosphate dehydrogenase 2 (Gapdh2), found in Drosophila pseudoobscura pseudoobscura (Fruit fly).